The sequence spans 125 residues: Small ribosomal subunit protein uS13 (125 aa).

Residues R92–K125 are disordered.

Belongs to the universal ribosomal protein uS13 family. In terms of assembly, part of the 30S ribosomal subunit. Forms a loose heterodimer with protein S19. Forms two bridges to the 50S subunit in the 70S ribosome.

Its function is as follows. Located at the top of the head of the 30S subunit, it contacts several helices of the 16S rRNA. In the 70S ribosome it contacts the 23S rRNA (bridge B1a) and protein L5 of the 50S subunit (bridge B1b), connecting the 2 subunits; these bridges are implicated in subunit movement. Contacts the tRNAs in the A and P-sites. This is Small ribosomal subunit protein uS13 from Akkermansia muciniphila (strain ATCC BAA-835 / DSM 22959 / JCM 33894 / BCRC 81048 / CCUG 64013 / CIP 107961 / Muc).